The following is a 178-amino-acid chain: Beta-lytic metalloendopeptidase (178 aa).

Cysteine 65 and cysteine 111 are joined by a disulfide. Positions 120 and 122 each coordinate Zn(2+). Residues cysteine 155 and cysteine 168 are joined by a disulfide bond.

The protein belongs to the peptidase M23A family. The cofactor is Zn(2+).

The catalysed reaction is Cleavage of N-acetylmuramoyl-|-Ala, and of the insulin B chain at 23-Gly-|-Phe-24 &gt; 18-Val-|-Cys(SO3H).. This chain is Beta-lytic metalloendopeptidase, found in Lysobacter enzymogenes.